A 376-amino-acid polypeptide reads, in one-letter code: Cyclin-D3-1 (376 aa).

Residues 298–376 (KRKSHDSSSS…HLPWAIVATP (79 aa)) are disordered. Low complexity predominate over residues 321–349 (NSDESSNDSWSASSCNPPTSSSSPQQQPP). Basic and acidic residues predominate over residues 354 to 363 (RGAEENEKKK).

This sequence belongs to the cyclin family. Cyclin D subfamily. Interacts with the C-terminal domain of CDKA-1. Interacts with KRP1/ICK1. Interacts with KRP6. In terms of processing, phosphorylated. As to expression, highly expressed in roots and at lower levels in leaves and flowers. Expressed in vegetative shoot meristem and inflorescence.

Functionally, involved in the control of the cell cycle at the G1/S (start) transition. Activates the G1/S phase transition in response to cytokinin hormone signal, but declines in response to sucrose starvation leading to G1 arrest. Involved in the induction of mitotic cell division. Plays an important role in the switch from cell proliferation to the final stages of differentiation during plant development. May not be involved in the activation of cell cycle in the root apical meristem (RAM) in the early phase of seed germination. Promotes divisions in the guard cells (GCs) after the guard mother cells (GMC) symmetric division. This Arabidopsis thaliana (Mouse-ear cress) protein is Cyclin-D3-1 (CYCD3-1).